The sequence spans 404 residues: Ubiquitin-like modifier-activating enzyme 5 (404 aa).

5 residues coordinate ATP: Gly83, Asp104, Lys127, Asn150, and Asn184. Residues Cys226 and Cys229 each coordinate Zn(2+). Cys250 (glycyl thioester intermediate) is an active-site residue. Positions 303 and 308 each coordinate Zn(2+). The tract at residues 372–404 is disordered; sequence APEKSSETSEETVSAATADETSLEDLMAQMKSM. Over residues 382–391 the composition is skewed to low complexity; the sequence is ETVSAATADE.

Belongs to the ubiquitin-activating E1 family. UBA5 subfamily. Interacts (via C-terminus) with Ufc1. Interacts with Ufm1.

The protein resides in the cytoplasm. The protein localises to the nucleus. It localises to the golgi apparatus. Functionally, E1-like enzyme which activates UFM1. The sequence is that of Ubiquitin-like modifier-activating enzyme 5 from Drosophila melanogaster (Fruit fly).